The following is a 116-amino-acid chain: MSVESFTPTALQFTQGAAHKVKTLVDEEGNDRLKLRVFVTGGGCSGFQYGFTFDEEVAEDDTIVEREGVSLVVDPMSFQYLAGAEVDYQEGLEGSRFVIKNPNATTTCGCGSSFSI.

Positions 44, 108, and 110 each coordinate iron-sulfur cluster.

The protein belongs to the HesB/IscA family. In terms of assembly, homodimer. Requires iron-sulfur cluster as cofactor.

Its function is as follows. Required for insertion of 4Fe-4S clusters for at least IspG. This is Iron-sulfur cluster insertion protein ErpA from Pseudomonas fluorescens (strain ATCC BAA-477 / NRRL B-23932 / Pf-5).